A 645-amino-acid chain; its full sequence is Serine/threonine-protein kinase BUR1 (645 aa).

The Protein kinase domain maps to 55–379 (YREEEKLGQG…AMKAKKHPFF (325 aa)). ATP-binding positions include 61-69 (LGQGTFGEV) and K84. The Proton acceptor role is filled by D208. 3 disordered regions span residues 407–428 (EMNE…STDN), 442–513 (ASIP…KYPA), and 533–645 (RYRN…ADYY). 2 stretches are compositionally biased toward polar residues: residues 409 to 428 (NESM…STDN) and 457 to 474 (IPAQ…TQNI). The span at 477–486 (EPIPTAPLPK) shows a compositional bias: pro residues. Over residues 578 to 598 (NRYQNQDYNTSRNTGYNQYSQ) the composition is skewed to polar residues.

Belongs to the protein kinase superfamily. CMGC Ser/Thr protein kinase family. CDC2/CDKX subfamily.

The protein localises to the nucleus. It carries out the reaction L-seryl-[protein] + ATP = O-phospho-L-seryl-[protein] + ADP + H(+). It catalyses the reaction L-threonyl-[protein] + ATP = O-phospho-L-threonyl-[protein] + ADP + H(+). The catalysed reaction is [DNA-directed RNA polymerase] + ATP = phospho-[DNA-directed RNA polymerase] + ADP + H(+). Serine/threonine-protein kinase involved in transcription regulation. Phosphorylates the UBC2/RAD6 ubiquitin-conjugating enzyme (E2), leading to monoubiquitination of histone H2B and the silencing of telomeric-associated genes. Also required for histone H3 methylation. Necessary for the recovery from pheromone-induced growth arrest in the cell cycle G1 phase. The polypeptide is Serine/threonine-protein kinase BUR1 (BUR1) (Kluyveromyces lactis (strain ATCC 8585 / CBS 2359 / DSM 70799 / NBRC 1267 / NRRL Y-1140 / WM37) (Yeast)).